The sequence spans 241 residues: Chaperone protein HifB (241 aa).

The first 27 residues, 1–27 (MGKTMFKKTLLFFTALFFAALCAFSAN), serve as a signal peptide directing secretion.

It belongs to the periplasmic pilus chaperone family.

The protein resides in the periplasm. Its function is as follows. Mediates assembly of pili by forming soluble multimeric complexes with pili subunits as an intermediate step in the assembly process. This protein is involved in type B pili (HifA) assembly. This is Chaperone protein HifB (hifB) from Haemophilus influenzae.